The following is a 379-amino-acid chain: Cytochrome b (379 aa).

4 consecutive transmembrane segments (helical) span residues Phe33 to Met53, Trp77 to Val98, Trp113 to Leu133, and Phe178 to Leu198. Positions 83 and 97 each coordinate heme b. Heme b-binding residues include His182 and His196. His201 is a binding site for a ubiquinone. 4 consecutive transmembrane segments (helical) span residues Ile226–Phe246, Leu288–Asn308, Ile320–Gly340, and Phe347–Pro367.

The protein belongs to the cytochrome b family. In terms of assembly, the cytochrome bc1 complex contains 11 subunits: 3 respiratory subunits (MT-CYB, CYC1 and UQCRFS1), 2 core proteins (UQCRC1 and UQCRC2) and 6 low-molecular weight proteins (UQCRH/QCR6, UQCRB/QCR7, UQCRQ/QCR8, UQCR10/QCR9, UQCR11/QCR10 and a cleavage product of UQCRFS1). This cytochrome bc1 complex then forms a dimer. Heme b is required as a cofactor.

The protein localises to the mitochondrion inner membrane. Its function is as follows. Component of the ubiquinol-cytochrome c reductase complex (complex III or cytochrome b-c1 complex) that is part of the mitochondrial respiratory chain. The b-c1 complex mediates electron transfer from ubiquinol to cytochrome c. Contributes to the generation of a proton gradient across the mitochondrial membrane that is then used for ATP synthesis. The chain is Cytochrome b (MT-CYB) from Akodon dolores (Dolorous grass mouse).